A 702-amino-acid polypeptide reads, in one-letter code: MDTREFPLDRTRNIGIMAHIDAGKTTTTERILYYTGKIHKIGETHDGASQMDFMDQEKERGITIQSAATTAIWHGFHEQWKDTPYRVNIIDTPGHVDFTIEVERSLRVLDGAIAVLDGAAGVEPQTETVWRQATTYAVPRLVFVNKMDKMGADFQMSVDSLKERLDVNAKAIQWPIGAEDDFAGVIDLIQREAWYPDDKLGTEWEKRPIPDDLKDLVEEKRDELIEAVADVDDSLMEKYLGEEEITVDDLKAAIRRATLALKFYPVLAGSAYKDKGVQLLLDAVVDYLPSPLEVRPYTATDPDTGDEVDLKADDKKPFAALAFKIMTDPYVGRLTFLRVYTGTLKSGSYVQNTTKDTRERVGRLLQMHAITRREIDEVFSGDIAAAIGLKATSTGDSLTSVDRPLVLESMEFPDPVIQMAVEPKTKADQEKMAEALQKLSEEDPSFHAETNSETGQTLISGMGELHLDIMVDRMRREFNVDVNVGTPQVAYREAFTKTVQAQGKYIRQSGGKGQYGDVWIEFSPNDEGKGFEFDNAIVGGAVPREYIPAVEQGLKEAMQSGPLAGYPLVDLKAKLYDGSYHEVDSSEAAFKIAASMSLREASKTAGAVILEPIMKVSIVSPIDNLGDVMGHVSARRGMIEDQETHGNTVTVTSKIPLAEMFGYTTTLRSATQGRGTFQMFFDHYEAVPRNVQEDIIKNAGKE.

One can recognise a tr-type G domain in the interval 9 to 292 (DRTRNIGIMA…AVVDYLPSPL (284 aa)). Residues 18 to 25 (AHIDAGKT), 91 to 95 (DTPGH), and 145 to 148 (NKMD) each bind GTP.

It belongs to the TRAFAC class translation factor GTPase superfamily. Classic translation factor GTPase family. EF-G/EF-2 subfamily.

The protein localises to the cytoplasm. In terms of biological role, catalyzes the GTP-dependent ribosomal translocation step during translation elongation. During this step, the ribosome changes from the pre-translocational (PRE) to the post-translocational (POST) state as the newly formed A-site-bound peptidyl-tRNA and P-site-bound deacylated tRNA move to the P and E sites, respectively. Catalyzes the coordinated movement of the two tRNA molecules, the mRNA and conformational changes in the ribosome. The protein is Elongation factor G of Oenococcus oeni (strain ATCC BAA-331 / PSU-1).